Reading from the N-terminus, the 165-residue chain is Large ribosomal subunit protein bL17 (165 aa).

Residues 138 to 158 (QEKREAQEKAREEKRTARKSD) show a composition bias toward basic and acidic residues. A disordered region spans residues 138–165 (QEKREAQEKAREEKRTARKSDSVPARKK).

The protein belongs to the bacterial ribosomal protein bL17 family. In terms of assembly, part of the 50S ribosomal subunit. Contacts protein L32.

In Leptospira borgpetersenii serovar Hardjo-bovis (strain JB197), this protein is Large ribosomal subunit protein bL17.